The following is a 530-amino-acid chain: AAA-ATPase At3g28510 (530 aa).

A helical membrane pass occupies residues 5-25 (GAIWGITGTTVTSFMFFWAIY). Residue 250–257 (GPPGTGKS) participates in ATP binding. Disordered regions lie at residues 312–339 (QRKK…KVDD) and 463–530 (KARK…KSDS). 2 stretches are compositionally biased toward basic and acidic residues: residues 326–339 (EEKK…KVDD) and 463–511 (KARK…KEEN). The segment covering 512-523 (GNVSQQNGNSID) has biased composition (polar residues).

Belongs to the AAA ATPase family. BCS1 subfamily. Mg(2+) serves as cofactor.

The protein localises to the membrane. It carries out the reaction ATP + H2O = ADP + phosphate + H(+). The polypeptide is AAA-ATPase At3g28510 (Arabidopsis thaliana (Mouse-ear cress)).